Reading from the N-terminus, the 355-residue chain is UDP-N-acetylglucosamine--N-acetylmuramyl-(pentapeptide) pyrophosphoryl-undecaprenol N-acetylglucosamine transferase (355 aa).

Residues 15–17, asparagine 127, arginine 163, serine 191, isoleucine 244, 263–268, and glutamine 288 contribute to the UDP-N-acetyl-alpha-D-glucosamine site; these read TGG and ALTVSE.

Belongs to the glycosyltransferase 28 family. MurG subfamily.

It localises to the cell inner membrane. It catalyses the reaction di-trans,octa-cis-undecaprenyl diphospho-N-acetyl-alpha-D-muramoyl-L-alanyl-D-glutamyl-meso-2,6-diaminopimeloyl-D-alanyl-D-alanine + UDP-N-acetyl-alpha-D-glucosamine = di-trans,octa-cis-undecaprenyl diphospho-[N-acetyl-alpha-D-glucosaminyl-(1-&gt;4)]-N-acetyl-alpha-D-muramoyl-L-alanyl-D-glutamyl-meso-2,6-diaminopimeloyl-D-alanyl-D-alanine + UDP + H(+). It participates in cell wall biogenesis; peptidoglycan biosynthesis. In terms of biological role, cell wall formation. Catalyzes the transfer of a GlcNAc subunit on undecaprenyl-pyrophosphoryl-MurNAc-pentapeptide (lipid intermediate I) to form undecaprenyl-pyrophosphoryl-MurNAc-(pentapeptide)GlcNAc (lipid intermediate II). This is UDP-N-acetylglucosamine--N-acetylmuramyl-(pentapeptide) pyrophosphoryl-undecaprenol N-acetylglucosamine transferase from Salmonella newport (strain SL254).